We begin with the raw amino-acid sequence, 182 residues long: CDP-diacylglycerol--glycerol-3-phosphate 3-phosphatidyltransferase (182 aa).

Residues 2 to 12 (QFNIPTLLTLF) lie on the Cytoplasmic side of the membrane. A helical membrane pass occupies residues 13–37 (RVILIPFFVLVFYLPVTWSPFAAAL). At 38-60 (IFCVAAVTDWFDGFLARRWNQST) the chain is on the periplasmic side. A helical transmembrane segment spans residues 61 to 81 (RFGAFLDPVADKVLVAIAMVL). The Cytoplasmic portion of the chain corresponds to 82–86 (VTEHY). Residues 87–107 (HSWWVTLPAATMIAREIIISA) traverse the membrane as a helical segment. At 108–145 (LREWMAELGKRSSVAVSWIGKVKTTAQMVALAWLLWRP) the chain is on the periplasmic side. A helical membrane pass occupies residues 146–168 (NIWVEYAGIALFFVAAVLTLWSM). Over 169–181 (LQYLSAARADLLD) the chain is Cytoplasmic.

It belongs to the CDP-alcohol phosphatidyltransferase class-I family.

The protein resides in the cell inner membrane. It catalyses the reaction a CDP-1,2-diacyl-sn-glycerol + sn-glycerol 3-phosphate = a 1,2-diacyl-sn-glycero-3-phospho-(1'-sn-glycero-3'-phosphate) + CMP + H(+). It participates in phospholipid metabolism; phosphatidylglycerol biosynthesis; phosphatidylglycerol from CDP-diacylglycerol: step 1/2. Catalyzes the conversion of cytidine diphosphate diacylglycerol (CDP-DG) and glycerol 3-phosphate into phosphatidylglycerol. Essential for the synthesis of anionic phospholipids, thereby playing a role in balancing the ratio of zwitterionic and anionic phospholipids, which is thought to be important for normal membrane function. This chain is CDP-diacylglycerol--glycerol-3-phosphate 3-phosphatidyltransferase, found in Shigella sonnei (strain Ss046).